The following is a 609-amino-acid chain: Cell division protein DipM (609 aa).

The signal sequence occupies residues 1-24 (MRQLWTQAAVIALTAGTLGAPAHA). The disordered stretch occupies residues 21–103 (PAHASGQSGQ…PVLRATPPRT (83 aa)). Over residues 25-38 (SGQSGQRFTPNFPI) the composition is skewed to polar residues. The span at 79-93 (LPPPAPVSTPAPAPQ) shows a compositional bias: pro residues. 2 consecutive LysM domains span residues 121-165 (QVRV…KIKG) and 171-215 (KAYV…KLLL). Composition is skewed to low complexity over residues 242-258 (AEPAPATTRPATPAATP) and 265-280 (PVSEETSEPATTSTTT). Residues 242–280 (AEPAPATTRPATPAATPSRPVRQPVSEETSEPATTSTTT) are disordered. 2 consecutive LysM domains span residues 295-339 (QVHT…KIKG) and 345-389 (KAYS…KIAL). The tract at residues 389-457 (LPDGFRDKGP…AAQPITPPPS (69 aa)) is disordered. The segment covering 400–429 (RTTTTTRPATPPANTYARVDSSAAAASTPS) has biased composition (low complexity). A lytM region spans residues 503-603 (NDGLNIRAPQ…VKDKAKPVDP (101 aa)).

The protein localises to the periplasm. In terms of biological role, required for efficient cell division, cell polarity and normal cell morphology. Facilitates remodeling of the peptidoglycan layer and, thus, coordinated constriction of the cell envelope during the division process. Plays a critical role in maintaining proper cell envelope architecture during growth and division. Required for normal envelope invagination during cell division and to establish or maintain outer membrane connections throughout the cell envelope. May serve as a regulatory hub coordinating the activities of multiple peptidoglycan-degrading enzymes during cell constriction. Required to position SdpA and SdpB at midcell. This is Cell division protein DipM from Caulobacter vibrioides (strain NA1000 / CB15N) (Caulobacter crescentus).